Consider the following 515-residue polypeptide: GMP synthase [glutamine-hydrolyzing] (515 aa).

Residues 6 to 198 form the Glutamine amidotransferase type-1 domain; that stretch reads KVIILDFGSQ…VFKVAGLKAD (193 aa). Cysteine 83 serves as the catalytic Nucleophile. Active-site residues include histidine 172 and glutamate 174. Residues 199–390 form the GMPS ATP-PPase domain; sequence WTMSSFVENC…LGLPEFIIWR (192 aa). 226 to 232 provides a ligand contact to ATP; it reads SGGIDST.

As to quaternary structure, homodimer.

It catalyses the reaction XMP + L-glutamine + ATP + H2O = GMP + L-glutamate + AMP + diphosphate + 2 H(+). It functions in the pathway purine metabolism; GMP biosynthesis; GMP from XMP (L-Gln route): step 1/1. In terms of biological role, catalyzes the synthesis of GMP from XMP. This is GMP synthase [glutamine-hydrolyzing] from Maridesulfovibrio salexigens (strain ATCC 14822 / DSM 2638 / NCIMB 8403 / VKM B-1763) (Desulfovibrio salexigens).